Reading from the N-terminus, the 156-residue chain is Extracellular giant hemoglobin major globin subunit A1 (156 aa).

Residues M1–A16 form the signal peptide. A Globin domain is found at V17–G156. C18 and C146 are disulfide-bonded. C79 lines the hydrogen sulfide pocket. H110 serves as a coordination point for heme b.

Belongs to the globin family. As to quaternary structure, the 400 kDa hemoglobin consists of a spherical 24-mer arranged as a double layer of dome-shaped dodecamers. Each dodecamer is composed of the 3-fold trimer of the tetramer A1-A2-B1-B2 having one intra-tetramer (A1-B2) disulfide bond and one inter-tetramer (B1-B2) disulfide bond per tetramer.

The protein localises to the secreted. In terms of biological role, the extracellular giant hemoglobin is able to bind and transport oxygen and hydrosulfide simultaneously and reversibly at two different sites. This is Extracellular giant hemoglobin major globin subunit A1 (ghbA1) from Oligobrachia mashikoi (Beard worm).